We begin with the raw amino-acid sequence, 177 residues long: Nucleoside-triphosphatase THEP1 (177 aa).

Residues 10-17 (GKPGIGKT) and 101-108 (CLVIDEIG) each bind ATP.

It belongs to the THEP1 NTPase family.

It catalyses the reaction a ribonucleoside 5'-triphosphate + H2O = a ribonucleoside 5'-diphosphate + phosphate + H(+). Has nucleotide phosphatase activity towards ATP, GTP, CTP, TTP and UTP. May hydrolyze nucleoside diphosphates with lower efficiency. This is Nucleoside-triphosphatase THEP1 from Natranaerobius thermophilus (strain ATCC BAA-1301 / DSM 18059 / JW/NM-WN-LF).